The sequence spans 194 residues: ATP-dependent Clp protease proteolytic subunit (194 aa).

Serine 98 serves as the catalytic Nucleophile. The active site involves histidine 123.

The protein belongs to the peptidase S14 family. As to quaternary structure, fourteen ClpP subunits assemble into 2 heptameric rings which stack back to back to give a disk-like structure with a central cavity, resembling the structure of eukaryotic proteasomes.

It localises to the cytoplasm. The catalysed reaction is Hydrolysis of proteins to small peptides in the presence of ATP and magnesium. alpha-casein is the usual test substrate. In the absence of ATP, only oligopeptides shorter than five residues are hydrolyzed (such as succinyl-Leu-Tyr-|-NHMec, and Leu-Tyr-Leu-|-Tyr-Trp, in which cleavage of the -Tyr-|-Leu- and -Tyr-|-Trp bonds also occurs).. In terms of biological role, cleaves peptides in various proteins in a process that requires ATP hydrolysis. Has a chymotrypsin-like activity. Plays a major role in the degradation of misfolded proteins. This is ATP-dependent Clp protease proteolytic subunit from Clostridium botulinum (strain Hall / ATCC 3502 / NCTC 13319 / Type A).